Consider the following 1375-residue polypeptide: Probable GMP synthase [glutamine-hydrolyzing] (1375 aa).

Residues 7-119 (QILVLDFGSQ…VLEIMESSQD (113 aa)) form the Glutamine amidotransferase type-1; first part domain. Catalysis depends on cysteine 84, which acts as the Nucleophile. The tract at residues 120–500 (SKDSSCFAFQ…NNATQGFKSC (381 aa)) is insert-1. 2 N-acetyltransferase domains span residues 141–300 (LSFD…KALE) and 318–484 (VFLR…LEKK). In terms of domain architecture, Glutamine amidotransferase type-1; second part spans 501–580 (SLFKGIKQDS…AVGICGANTC (80 aa)). Active-site residues include histidine 554 and glutamate 556. The insert-2 stretch occupies residues 597–1071 (IVYGGKAHCE…SGVANSLKIT (475 aa)). An N-acetyltransferase 3 domain is found at 612 to 765 (MQIQEAFKHI…ELIPLSIARE (154 aa)). The disordered stretch occupies residues 1011–1036 (RIVDSQHTESSDIKGQSHLESSADSG). A compositionally biased stretch (basic and acidic residues) spans 1014 to 1027 (DSQHTESSDIKGQS). Positions 1055–1250 (YLEGNDRSGV…LGMPESMLMR (196 aa)) constitute a GMPS ATP-PPase domain. An ATP-binding site is contributed by 1083–1089 (SGGVDSS).

As to quaternary structure, homodimer.

It catalyses the reaction XMP + L-glutamine + ATP + H2O = GMP + L-glutamate + AMP + diphosphate + 2 H(+). The protein operates within purine metabolism; GMP biosynthesis; GMP from XMP (L-Gln route): step 1/1. Functionally, catalyzes the synthesis of GMP from XMP. This chain is Probable GMP synthase [glutamine-hydrolyzing] (guaA), found in Helicobacter hepaticus (strain ATCC 51449 / 3B1).